Reading from the N-terminus, the 549-residue chain is Longitudinals lacking protein, isoforms H/M/V (549 aa).

One can recognise a BTB domain in the interval 32 to 97; the sequence is VDCTLAAEGK…MYRGEVNISQ (66 aa). 2 disordered regions span residues 115–200 and 228–340; these read LSDN…SSVL and SSGP…ASAS. Composition is skewed to low complexity over residues 162-175, 228-251, 263-293, and 329-340; these read SGDV…SSSP, SSGP…LTST, TSST…QTTS, and NSATGPNPASAS.

Mostly neuronal.

It is found in the nucleus. Functionally, putative transcription factor required for axon growth and guidance in the central and peripheral nervous systems. Repels CNS axons away from the midline by promoting the expression of the midline repellent sli and its receptor robo. This Drosophila melanogaster (Fruit fly) protein is Longitudinals lacking protein, isoforms H/M/V.